The following is a 197-amino-acid chain: Pyridoxal 5'-phosphate synthase subunit PdxT (197 aa).

Position 53–55 (53–55) interacts with L-glutamine; the sequence is GES. Cysteine 85 (nucleophile) is an active-site residue. Residues arginine 114 and 142–143 each bind L-glutamine; that span reads IR. Catalysis depends on charge relay system residues histidine 179 and glutamate 181.

This sequence belongs to the glutaminase PdxT/SNO family. In the presence of PdxS, forms a dodecamer of heterodimers. Only shows activity in the heterodimer.

The catalysed reaction is aldehydo-D-ribose 5-phosphate + D-glyceraldehyde 3-phosphate + L-glutamine = pyridoxal 5'-phosphate + L-glutamate + phosphate + 3 H2O + H(+). It carries out the reaction L-glutamine + H2O = L-glutamate + NH4(+). It functions in the pathway cofactor biosynthesis; pyridoxal 5'-phosphate biosynthesis. Its function is as follows. Catalyzes the hydrolysis of glutamine to glutamate and ammonia as part of the biosynthesis of pyridoxal 5'-phosphate. The resulting ammonia molecule is channeled to the active site of PdxS. The chain is Pyridoxal 5'-phosphate synthase subunit PdxT from Thermococcus gammatolerans (strain DSM 15229 / JCM 11827 / EJ3).